Reading from the N-terminus, the 191-residue chain is Hypoxanthine/guanine phosphoribosyltransferase (191 aa).

The protein belongs to the purine/pyrimidine phosphoribosyltransferase family. Archaeal HPRT subfamily. As to quaternary structure, homodimer.

It is found in the cytoplasm. It catalyses the reaction IMP + diphosphate = hypoxanthine + 5-phospho-alpha-D-ribose 1-diphosphate. The catalysed reaction is GMP + diphosphate = guanine + 5-phospho-alpha-D-ribose 1-diphosphate. It functions in the pathway purine metabolism; IMP biosynthesis via salvage pathway; IMP from hypoxanthine: step 1/1. Its function is as follows. Catalyzes a salvage reaction resulting in the formation of IMP that is energically less costly than de novo synthesis. The sequence is that of Hypoxanthine/guanine phosphoribosyltransferase from Methanocella arvoryzae (strain DSM 22066 / NBRC 105507 / MRE50).